We begin with the raw amino-acid sequence, 555 residues long: Natural resistance-associated macrophage protein 1 (555 aa).

The Cytoplasmic segment spans residues 1-63; that stretch reads MSGSGPAMAS…STPGFSFRKL (63 aa). A helical transmembrane segment spans residues 64–81; that stretch reads WAFTGPGFLMSIAYLDPG. The Extracellular portion of the chain corresponds to 82–90; that stretch reads NVESDLQCG. A helical transmembrane segment spans residues 91–110; that stretch reads AVAGFKLLWVLLWATVLGLL. Residues 111-147 lie on the Cytoplasmic side of the membrane; sequence CQRLAIRLGVVTGKDLAEICYLYYPRVPRVLLWLMME. The chain crosses the membrane as a helical span at residues 148–168; the sequence is IAIIGSDMQEVIGTAIAFSLL. Topologically, residues 169 to 172 are extracellular; it reads SAGR. Residues 173–192 traverse the membrane as a helical segment; it reads IPLWGGVLITITDTLFFLFL. The Cytoplasmic segment spans residues 193 to 201; sequence DKYGLRKLE. Residues 202-222 form a helical membrane-spanning segment; it reads AFFGFLITIMALTFGYEYVMV. Residues 223 to 245 are Extracellular-facing; the sequence is RPAQTEVLKGIFLPYCPGCGREE. The helical transmembrane segment at 246–264 threads the bilayer; that stretch reads LLQAVGIVGAIIMPHNIFL. Over 265-292 the chain is Cytoplasmic; sequence HSSLVKTRAIDRSKKEEVKEANMYFLTE. Residues 293–312 form a helical membrane-spanning segment; it reads SCLALFVSFLINLFVMAVFG. Topologically, residues 313-354 are extracellular; the sequence is EAFYHQRNEDVHNKCVNSSVSRYASIFPINNETVSVDIYQGG. N-linked (GlcNAc...) asparagine glycans are attached at residues N329 and N343. The helical transmembrane segment at 355–374 threads the bilayer; it reads VILGCYFGAAALYIWAVGIL. The Cytoplasmic segment spans residues 375-405; that stretch reads AAGQSSTMTGTYAGQFVMEGFLQLRWSRFTR. Residues 406 to 423 traverse the membrane as a helical segment; that stretch reads VLFTRSLAILPTLFVAAF. Residues 424-434 are Extracellular-facing; the sequence is RDVSQLTGMND. The chain crosses the membrane as a helical span at residues 435–455; sequence LLNVLQSILLPFAVLPVLTFT. Residues 456–471 are Cytoplasmic-facing; it reads SLRPLMHDFANGLLGQ. Residues 472-493 form a helical membrane-spanning segment; sequence VLMSLITGLVCAINVYFVVDFL. Residues 494 to 501 are Extracellular-facing; sequence PTLRGLGY. The helical transmembrane segment at 502–521 threads the bilayer; the sequence is LIPLGLLLVAYVAFVTYLLW. Topologically, residues 522–555 are cytoplasmic; it reads TCSIAHGARFLARGRYNRFSFDVTADVPGLAGPH.

Belongs to the NRAMP family. As to expression, macrophages; spleen and thymus and at lower level in liver and lung.

The protein resides in the late endosome membrane. The protein localises to the lysosome membrane. The catalysed reaction is Zn(2+)(in) + H(+)(out) = Zn(2+)(out) + H(+)(in). It carries out the reaction Fe(2+)(in) + H(+)(out) = Fe(2+)(out) + H(+)(in). It catalyses the reaction Mn(2+)(in) + H(+)(out) = Mn(2+)(out) + H(+)(in). Its function is as follows. Macrophage-specific antiporter that fluxes metal ions in either direction against a proton gradient. Localized to late endosomal lysosomal membranes, delivers bivalent cations from the cytosol into these acidic compartments where they may directly affect antimicrobial activity. Involved in iron metabolism and host natural resistance to infection with intracellular parasites. Pathogen resistance involves sequestration of Fe(2+) and Mn(2+), cofactors of both prokaryotic and eukaryotic catalases and superoxide dismutases, not only to protect the macrophage against its own generation of reactive oxygen species, but to deny the cations to the pathogen for synthesis of its protective enzymes. The protein is Natural resistance-associated macrophage protein 1 (SLC11A1) of Gallus gallus (Chicken).